We begin with the raw amino-acid sequence, 378 residues long: Erythronate-4-phosphate dehydrogenase (378 aa).

Positions 45 and 66 each coordinate substrate. NAD(+)-binding residues include Asp-146 and Thr-175. Arg-208 is a catalytic residue. Residue Asp-232 participates in NAD(+) binding. Residue Glu-237 is part of the active site. Residue His-254 is the Proton donor of the active site. An NAD(+)-binding site is contributed by Gly-257. Tyr-258 lines the substrate pocket.

The protein belongs to the D-isomer specific 2-hydroxyacid dehydrogenase family. PdxB subfamily. In terms of assembly, homodimer.

It is found in the cytoplasm. The enzyme catalyses 4-phospho-D-erythronate + NAD(+) = (R)-3-hydroxy-2-oxo-4-phosphooxybutanoate + NADH + H(+). It functions in the pathway cofactor biosynthesis; pyridoxine 5'-phosphate biosynthesis; pyridoxine 5'-phosphate from D-erythrose 4-phosphate: step 2/5. In terms of biological role, catalyzes the oxidation of erythronate-4-phosphate to 3-hydroxy-2-oxo-4-phosphonooxybutanoate. The protein is Erythronate-4-phosphate dehydrogenase of Escherichia coli (strain ATCC 8739 / DSM 1576 / NBRC 3972 / NCIMB 8545 / WDCM 00012 / Crooks).